We begin with the raw amino-acid sequence, 213 residues long: Uridine kinase (213 aa).

15–22 is a binding site for ATP; that stretch reads GASASGKS.

The protein belongs to the uridine kinase family.

The protein resides in the cytoplasm. It carries out the reaction uridine + ATP = UMP + ADP + H(+). It catalyses the reaction cytidine + ATP = CMP + ADP + H(+). The protein operates within pyrimidine metabolism; CTP biosynthesis via salvage pathway; CTP from cytidine: step 1/3. It participates in pyrimidine metabolism; UMP biosynthesis via salvage pathway; UMP from uridine: step 1/1. The polypeptide is Uridine kinase (Serratia proteamaculans (strain 568)).